The following is a 142-amino-acid chain: Biogenesis of lysosome-related organelles complex 1 subunit 2 (142 aa).

The tract at residues 1–33 (MAAAAEGVLATRSDEPARDDAAVETAEEAKEPA) is disordered. N-acetylalanine is present on Ala2. Basic and acidic residues predominate over residues 12 to 33 (RSDEPARDDAAVETAEEAKEPA). Residues 79–127 (EMKDIAINISRNLKDLNQKYAGLQPYLDQINVIEEQVAALEQAAYKLDA) adopt a coiled-coil conformation.

It belongs to the BLOC1S2 family. In terms of assembly, component of the biogenesis of lysosome-related organelles complex 1 (BLOC-1) composed of BLOC1S1, BLOC1S2, BLOC1S3, BLOC1S4, BLOC1S5, BLOC1S6, DTNBP1/BLOC1S7 and SNAPIN/BLOC1S8. Octamer composed of one copy each BLOC1S1, BLOC1S2, BLOC1S3, BLOC1S4, BLOC1S5, BLOC1S6, DTNBP1/BLOC1S7 and SNAPIN/BLOC1S8. Interacts directly with BLOC1S1, BLOC1S3, BLOC1S4, BLOC1S5 and SNAPIN. The BLOC-1 complex associates with the AP-3 protein complex and membrane protein cargos. Component of the BLOC-one-related complex (BORC) which is composed of BLOC1S1, BLOC1S2, BORCS5, BORCS6, BORCS7, BORCS8, KXD1 and SNAPIN. Interacts with gamma-tubulin. Interacts with IFT57. Isoform 1 and isoform 2 are widely expressed. Expressed in various malignant tumor tissues (at protein level).

Its subcellular location is the cytoplasm. It localises to the cytoskeleton. It is found in the microtubule organizing center. The protein resides in the centrosome. The protein localises to the lysosome membrane. In terms of biological role, component of the BLOC-1 complex, a complex that is required for normal biogenesis of lysosome-related organelles (LRO), such as platelet dense granules and melanosomes. In concert with the AP-3 complex, the BLOC-1 complex is required to target membrane protein cargos into vesicles assembled at cell bodies for delivery into neurites and nerve terminals. The BLOC-1 complex, in association with SNARE proteins, is also proposed to be involved in neurite extension. As part of the BORC complex may play a role in lysosomes movement and localization at the cell periphery. Associated with the cytosolic face of lysosomes, the BORC complex may recruit ARL8B and couple lysosomes to microtubule plus-end-directed kinesin motor. May play a role in cell proliferation. The chain is Biogenesis of lysosome-related organelles complex 1 subunit 2 (BLOC1S2) from Homo sapiens (Human).